Here is a 515-residue protein sequence, read N- to C-terminus: Probable cytochrome P450 4p3 (515 aa).

Residues E322 and C461 each coordinate heme.

This sequence belongs to the cytochrome P450 family. The cofactor is heme.

It localises to the endoplasmic reticulum membrane. The protein resides in the microsome membrane. Its function is as follows. May be involved in the metabolism of insect hormones and in the breakdown of synthetic insecticides. The protein is Probable cytochrome P450 4p3 (Cyp4p3) of Drosophila melanogaster (Fruit fly).